The primary structure comprises 434 residues: Ribosomal protein uS12 methylthiotransferase RimO (434 aa).

Positions 4-122 constitute an MTTase N-terminal domain; the sequence is NRVDVITLGC…LISHLGKSYY (119 aa). [4Fe-4S] cluster is bound by residues Cys-13, Cys-51, Cys-85, Cys-146, Cys-150, and Cys-153. Residues 132–363 enclose the Radical SAM core domain; the sequence is TTPRHYAYLK…MAVQERISAA (232 aa). The region spanning 366 to 434 is the TRAM domain; it reads EAKIGSRLRV…PFDLYARIVD (69 aa).

It belongs to the methylthiotransferase family. RimO subfamily. The cofactor is [4Fe-4S] cluster.

Its subcellular location is the cytoplasm. The catalysed reaction is L-aspartate(89)-[ribosomal protein uS12]-hydrogen + (sulfur carrier)-SH + AH2 + 2 S-adenosyl-L-methionine = 3-methylsulfanyl-L-aspartate(89)-[ribosomal protein uS12]-hydrogen + (sulfur carrier)-H + 5'-deoxyadenosine + L-methionine + A + S-adenosyl-L-homocysteine + 2 H(+). Functionally, catalyzes the methylthiolation of an aspartic acid residue of ribosomal protein uS12. The protein is Ribosomal protein uS12 methylthiotransferase RimO of Porphyromonas gingivalis (strain ATCC 33277 / DSM 20709 / CIP 103683 / JCM 12257 / NCTC 11834 / 2561).